The following is a 192-amino-acid chain: uncharacterized protein (192 aa).

This is an uncharacterized protein from Magallana gigas (Pacific oyster).